Here is a 543-residue protein sequence, read N- to C-terminus: CTP synthase (543 aa).

The interval 1-267 (MKQTKYIFVT…LNPIAEILDL (267 aa)) is amidoligase domain. Ser-15 provides a ligand contact to CTP. A UTP-binding site is contributed by Ser-15. Residues 16 to 21 (SLGKGI) and Asp-73 each bind ATP. Mg(2+) contacts are provided by Asp-73 and Glu-141. CTP contacts are provided by residues 148–150 (DIE), 188–193 (KTKPTQ), and Lys-224. UTP contacts are provided by residues 188–193 (KTKPTQ) and Lys-224. The Glutamine amidotransferase type-1 domain maps to 292–543 (KIAFVGKYVD…IKAAINYEDN (252 aa)). L-glutamine is bound at residue Gly-354. Cys-381 (nucleophile; for glutamine hydrolysis) is an active-site residue. Residues 382 to 385 (LGMQ), Glu-405, and Arg-473 contribute to the L-glutamine site. Active-site residues include His-516 and Glu-518.

The protein belongs to the CTP synthase family. In terms of assembly, homotetramer.

It catalyses the reaction UTP + L-glutamine + ATP + H2O = CTP + L-glutamate + ADP + phosphate + 2 H(+). It carries out the reaction L-glutamine + H2O = L-glutamate + NH4(+). The enzyme catalyses UTP + NH4(+) + ATP = CTP + ADP + phosphate + 2 H(+). It participates in pyrimidine metabolism; CTP biosynthesis via de novo pathway; CTP from UDP: step 2/2. With respect to regulation, allosterically activated by GTP, when glutamine is the substrate; GTP has no effect on the reaction when ammonia is the substrate. The allosteric effector GTP functions by stabilizing the protein conformation that binds the tetrahedral intermediate(s) formed during glutamine hydrolysis. Inhibited by the product CTP, via allosteric rather than competitive inhibition. Functionally, catalyzes the ATP-dependent amination of UTP to CTP with either L-glutamine or ammonia as the source of nitrogen. Regulates intracellular CTP levels through interactions with the four ribonucleotide triphosphates. This chain is CTP synthase, found in Campylobacter jejuni subsp. doylei (strain ATCC BAA-1458 / RM4099 / 269.97).